Here is a 457-residue protein sequence, read N- to C-terminus: Tubulin alpha chain (457 aa).

Residues Q12, E77, S146, G150, T151, T186, N213, and N235 each contribute to the GTP site. E77 serves as a coordination point for Mg(2+).

The protein belongs to the tubulin family. Dimer of alpha and beta chains. A typical microtubule is a hollow water-filled tube with an outer diameter of 25 nm and an inner diameter of 15 nM. Alpha-beta heterodimers associate head-to-tail to form protofilaments running lengthwise along the microtubule wall with the beta-tubulin subunit facing the microtubule plus end conferring a structural polarity. Microtubules usually have 13 protofilaments but different protofilament numbers can be found in some organisms and specialized cells. Mg(2+) serves as cofactor. Undergoes a tyrosination/detyrosination cycle, the cyclic removal and re-addition of a C-terminal tyrosine residue by the enzymes tubulin tyrosine carboxypeptidase (TTCP) and tubulin tyrosine ligase (TTL), respectively.

The protein localises to the cytoplasm. Its subcellular location is the cytoskeleton. The catalysed reaction is GTP + H2O = GDP + phosphate + H(+). In terms of biological role, tubulin is the major constituent of microtubules, a cylinder consisting of laterally associated linear protofilaments composed of alpha- and beta-tubulin heterodimers. Microtubules grow by the addition of GTP-tubulin dimers to the microtubule end, where a stabilizing cap forms. Below the cap, tubulin dimers are in GDP-bound state, owing to GTPase activity of alpha-tubulin. The protein is Tubulin alpha chain (tubA) of Dictyostelium discoideum (Social amoeba).